We begin with the raw amino-acid sequence, 411 residues long: Heparan-sulfate 6-O-sulfotransferase 1 (411 aa).

At 11–17 (MVERASK) the chain is on the cytoplasmic side. Residues 18–37 (FVLVVAGSVCFMLILYQYAG) traverse the membrane as a helical; Signal-anchor for type II membrane protein segment. Topologically, residues 38–411 (PGLSLGAPGG…DYMSHIIEKW (374 aa)) are lumenal. 3'-phosphoadenylyl sulfate is bound at residue 93–101 (HIQKTGGTT). Substrate-binding positions include 123 to 124 (KK), Arg-140, Trp-145, and His-150. His-150 serves as the catalytic Proton acceptor. The 3'-phosphoadenylyl sulfate site is built by Arg-185 and Ser-193. Substrate-binding residues include His-197 and Trp-204. A glycan (N-linked (GlcNAc...) asparagine) is linked at Asn-264. 317 to 319 (MQY) serves as a coordination point for 3'-phosphoadenylyl sulfate. N-linked (GlcNAc...) asparagine glycosylation is present at Asn-320. 323–324 (RA) is a 3'-phosphoadenylyl sulfate binding site. Residues 352 to 387 (KDLFQQRYQYKRQLERREQRLRSREERLLHRAKEAL) are a coiled coil.

It belongs to the sulfotransferase 6 family. N-glycosylated. In terms of tissue distribution, expressed in fetal brain.

It localises to the membrane. It carries out the reaction alpha-D-glucosaminyl-[heparan sulfate](n) + 3'-phosphoadenylyl sulfate = 6-sulfo-alpha-D-glucosaminyl-[heparan sulfate](n) + adenosine 3',5'-bisphosphate + H(+). 6-O-sulfation enzyme which catalyzes the transfer of sulfate from 3'-phosphoadenosine 5'-phosphosulfate (PAPS) to position 6 of the N-sulfoglucosamine residue (GlcNS) of heparan sulfate. Critical for normal neuronal development where it may play a role in neuron branching. May also play a role in limb development. May prefer iduronic acid. The polypeptide is Heparan-sulfate 6-O-sulfotransferase 1 (Homo sapiens (Human)).